Consider the following 488-residue polypeptide: MTFNHKTIEELHDLLVKKEISAVELTQATLADIKEREGAVDSFITVSEEEALAKAAALDAKGIDADNLMSGIPLAVKDNISTKGILTTAASKMLYNYKPIFDATSVEKLYGKDMIIVGKTNMDEFAMGGSSENSYFKTTKNAWDGSKVPGGSSGGSATAVASGQVRLSLGSDTGGSIRQPASFNGVVGLKPTYGRVSRFGLIAFGSSLDQIGPFSQTVKENAQLLNVISGNDPKDSTSSQEAVPDFTNKIGQDIKGMKIALPKEYMGEGIDSKVKETILAAAKHLESLGAIVEEVSLPHSKYGVAVYYIIASSEASSNLQRFDGIRYGYRAEDIENLEDVYVKSRSEGFGEEVKRRIMLGTFSLSSGYYDAYFKKAGQVRTLIMQDFAKVFEKYDLILGPTAPTVAYDLGSQNQDPVAMYLADLLTIPVNLAGLPGISIPAGFADGLPVGLQLIGNHFDEATIYQAAAAFEATTDYHKQQPVIFGGEK.

Residues Lys77 and Ser152 each act as charge relay system in the active site. The active-site Acyl-ester intermediate is the Ser176.

It belongs to the amidase family. GatA subfamily. In terms of assembly, heterotrimer of A, B and C subunits.

The catalysed reaction is L-glutamyl-tRNA(Gln) + L-glutamine + ATP + H2O = L-glutaminyl-tRNA(Gln) + L-glutamate + ADP + phosphate + H(+). In terms of biological role, allows the formation of correctly charged Gln-tRNA(Gln) through the transamidation of misacylated Glu-tRNA(Gln) in organisms which lack glutaminyl-tRNA synthetase. The reaction takes place in the presence of glutamine and ATP through an activated gamma-phospho-Glu-tRNA(Gln). The polypeptide is Glutamyl-tRNA(Gln) amidotransferase subunit A (Streptococcus gordonii (strain Challis / ATCC 35105 / BCRC 15272 / CH1 / DL1 / V288)).